The sequence spans 354 residues: DNA polymerase IV 2 (354 aa).

A UmuC domain is found at 4-184 (IIHIDMDAFY…LPVKKFHGVG (181 aa)). The Mg(2+) site is built by D8 and D102. Residue E103 is part of the active site.

The protein belongs to the DNA polymerase type-Y family. Monomer. Requires Mg(2+) as cofactor.

It localises to the cytoplasm. The catalysed reaction is DNA(n) + a 2'-deoxyribonucleoside 5'-triphosphate = DNA(n+1) + diphosphate. Its function is as follows. Poorly processive, error-prone DNA polymerase involved in untargeted mutagenesis. Copies undamaged DNA at stalled replication forks, which arise in vivo from mismatched or misaligned primer ends. These misaligned primers can be extended by PolIV. Exhibits no 3'-5' exonuclease (proofreading) activity. May be involved in translesional synthesis, in conjunction with the beta clamp from PolIII. This is DNA polymerase IV 2 (dinB2) from Rhizobium meliloti (strain 1021) (Ensifer meliloti).